The primary structure comprises 411 residues: Tyrosine--tRNA ligase (411 aa).

An L-tyrosine-binding site is contributed by Tyr-33. The short motif at 38 to 47 is the 'HIGH' region element; it reads PTAESLHLGN. L-tyrosine-binding residues include Tyr-160 and Gln-164. Positions 222–226 match the 'KMSKS' region motif; sequence KIGKS. ATP is bound at residue Lys-225. In terms of domain architecture, S4 RNA-binding spans 347–411; the sequence is SVIETLIKNK…KKQVILFKTV (65 aa).

It belongs to the class-I aminoacyl-tRNA synthetase family. TyrS type 1 subfamily. In terms of assembly, homodimer.

The protein localises to the cytoplasm. It carries out the reaction tRNA(Tyr) + L-tyrosine + ATP = L-tyrosyl-tRNA(Tyr) + AMP + diphosphate + H(+). Functionally, catalyzes the attachment of tyrosine to tRNA(Tyr) in a two-step reaction: tyrosine is first activated by ATP to form Tyr-AMP and then transferred to the acceptor end of tRNA(Tyr). This Mycoplasmopsis agalactiae (strain NCTC 10123 / CIP 59.7 / PG2) (Mycoplasma agalactiae) protein is Tyrosine--tRNA ligase.